Reading from the N-terminus, the 196-residue chain is Chorion protein S19 (196 aa).

The first 16 residues, 1 to 16, serve as a signal peptide directing secretion; it reads MNTFATLAIFISACLA.

This sequence belongs to the chorion protein S19 family.

It is found in the secreted. Its function is as follows. Chorion membrane (egg shell) protein; plays a role in protecting the egg from the environment. The polypeptide is Chorion protein S19 (Cp19) (Drosophila grimshawi (Hawaiian fruit fly)).